Here is a 102-residue protein sequence, read N- to C-terminus: Large ribosomal subunit protein bL21 (102 aa).

It belongs to the bacterial ribosomal protein bL21 family. As to quaternary structure, part of the 50S ribosomal subunit. Contacts protein L20.

Functionally, this protein binds to 23S rRNA in the presence of protein L20. In Bacillus pumilus (strain SAFR-032), this protein is Large ribosomal subunit protein bL21.